The following is a 388-amino-acid chain: Lamin tail domain-containing protein 1 (388 aa).

An LTD domain is found at Glu-136–His-254. A disordered region spans residues Glu-349–Gln-388. Basic residues predominate over residues Arg-365–Lys-381.

This sequence belongs to the intermediate filament family.

This is Lamin tail domain-containing protein 1 (LMNTD1) from Homo sapiens (Human).